Reading from the N-terminus, the 397-residue chain is Transcription factor TGAL6 (397 aa).

The bZIP domain maps to 104–148; that stretch reads PDKVLRRLAQNREAARKSRLRKKAYIQQLETSRLKLAQLEQELQR. Positions 106–126 are basic motif; it reads KVLRRLAQNREAARKSRLRKK. The tract at residues 132-146 is leucine-zipper; the sequence is LETSRLKLAQLEQEL. In terms of domain architecture, DOG1 spans 175 to 390; it reads ALGFEIKYSH…RALSSLWAAR (216 aa).

Belongs to the bZIP family.

The protein resides in the nucleus. In terms of biological role, transcriptional regulator involved in defense response. The protein is Transcription factor TGAL6 of Oryza sativa subsp. japonica (Rice).